The sequence spans 723 residues: 1,3-beta-galactosyl-N-acetylhexosamine phosphorylase Cphy0577 (723 aa).

Asp317 acts as the Proton donor in catalysis.

The protein belongs to the glycoside hydrolase 112 family.

The enzyme catalyses beta-D-galactosyl-(1-&gt;3)-N-acetyl-D-glucosamine + phosphate = alpha-D-galactose 1-phosphate + N-acetyl-D-glucosamine. In terms of biological role, reversibly phosphorolyzes beta-D-galactopyranosyl-(1-&gt;3)-N-acetyl-D-glucosamine to form alpha-D-galactopyranose 1-phosphate and acetyl-D-glucosamine. Active towards galacto-N-biose and lacto-N-biose. Does not phosphorolyze galacto-N-tetraose or lacto-N-tetraose. In the reverse reaction has activity toward N-acetyl-D-glucosamine and N-acetyl-D-galactosamine, but not L-rhamnose, D-glucose or D-galactose. The sequence is that of 1,3-beta-galactosyl-N-acetylhexosamine phosphorylase Cphy0577 from Lachnoclostridium phytofermentans (strain ATCC 700394 / DSM 18823 / ISDg) (Clostridium phytofermentans).